The primary structure comprises 139 residues: UPF0225 protein Bpro_4182 (139 aa).

The protein belongs to the UPF0225 family.

The protein is UPF0225 protein Bpro_4182 of Polaromonas sp. (strain JS666 / ATCC BAA-500).